A 141-amino-acid chain; its full sequence is Hemoglobin subunit alpha (141 aa).

Residues 1 to 141 (VLSSADKNNV…VSTVLTSKYR (141 aa)) enclose the Globin domain. Residue Ser3 is modified to Phosphoserine. Residues Lys7 and Lys11 each carry the N6-succinyllysine modification. An N6-acetyllysine; alternate modification is found at Lys16. Residue Lys16 is modified to N6-succinyllysine; alternate. Tyr24 carries the phosphotyrosine modification. The residue at position 35 (Ser35) is a Phosphoserine. An N6-succinyllysine modification is found at Lys40. Position 49 is a phosphoserine (Ser49). His58 lines the O2 pocket. His87 provides a ligand contact to heme b. A Phosphoserine modification is found at Ser102. Thr108 bears the Phosphothreonine mark. Ser124 is subject to Phosphoserine. Phosphothreonine occurs at positions 134 and 137. A Phosphoserine modification is found at Ser138.

This sequence belongs to the globin family. Heterotetramer of two alpha chains and two beta chains. As to expression, red blood cells.

Involved in oxygen transport from the lung to the various peripheral tissues. Functionally, hemopressin acts as an antagonist peptide of the cannabinoid receptor CNR1. Hemopressin-binding efficiently blocks cannabinoid receptor CNR1 and subsequent signaling. This chain is Hemoglobin subunit alpha (HBA), found in Panthera pardus saxicolor (Northern Persian leopard).